Consider the following 483-residue polypeptide: Betaine aldehyde dehydrogenase (483 aa).

K(+) contacts are provided by Ile-27 and Asp-93. Gly-149 to Trp-151 is a binding site for NAD(+). Residue Lys-161 is the Charge relay system of the active site. Residue Lys-175 to Glu-178 coordinates NAD(+). A K(+)-binding site is contributed by Val-179. Ser-228–Thr-231 is a binding site for NAD(+). Residue Val-243 participates in K(+) binding. The active-site Proton acceptor is the Glu-249. Residues Gly-251, Cys-283, and Glu-380 each contribute to the NAD(+) site. Cys-283 functions as the Nucleophile in the catalytic mechanism. Cys-283 is modified (cysteine sulfenic acid (-SOH)). K(+)-binding residues include Lys-450 and Gly-453. Catalysis depends on Glu-457, which acts as the Charge relay system.

This sequence belongs to the aldehyde dehydrogenase family. In terms of assembly, dimer of dimers. It depends on K(+) as a cofactor.

It carries out the reaction betaine aldehyde + NAD(+) + H2O = glycine betaine + NADH + 2 H(+). It participates in amine and polyamine biosynthesis; betaine biosynthesis via choline pathway; betaine from betaine aldehyde: step 1/1. In terms of biological role, involved in the biosynthesis of the osmoprotectant glycine betaine. Catalyzes the irreversible oxidation of betaine aldehyde to the corresponding acid. The sequence is that of Betaine aldehyde dehydrogenase from Cereibacter sphaeroides (strain ATCC 17029 / ATH 2.4.9) (Rhodobacter sphaeroides).